Consider the following 255-residue polypeptide: Tablysin 15 (255 aa).

The signal sequence occupies residues 1-23; sequence MTSIPVSSFLLAALVLQYATSDA. Disulfide bonds link Cys27–Cys40, Cys31–Cys117, and Cys49–Cys110. A Cell attachment site motif is present at residues 32 to 34; that stretch reads RGD. In terms of domain architecture, SCP spans 67–211; the sequence is LSKINDVRDH…KARALLTCNF (145 aa). Positions 82, 153, and 156 each coordinate leukotriene E4. 2 disulfide bridges follow: Cys192–Cys209 and Cys232–Cys243.

This sequence belongs to the CRISP family. Expressed in salivary glands.

It is found in the secreted. Its function is as follows. Anti-inflammatory scavenger of eicosanoids and antithrombotic protein that inhibits platelets aggregation induced by collagen, ADP and convulxin (GPVI agonist). Exhibits high affinity binding for glycoprotein IIb-IIIa receptor (ITGA2B/ITGB3) and endothelial cell alphaVbeta3 (ITGAV/ITGB3) integrins, but not for alpha-5/beta-1 or alpha-2/beta-1. Accordingly, it blocks endothelial cell adhesion to vitronectin (IC(50)~1 nM) and marginally to fibronectin (IC(50)~1 uM), but not to collagen. It also inhibits fibroblast growth factor (FGF)-induced endothelial cell proliferation, and attenuates tube formation in vitro. In addition, it dose-dependently attenuates thrombus formation to collagen under flow. Also binds proinflammatory cysteinyl leukotrienes (leukotrienes C4 (LTC4), D4 (LTD4) and E4 (LTE4)) with submicromolar affinities. The polypeptide is Tablysin 15 (Tabanus yao (Horsefly)).